Consider the following 479-residue polypeptide: Trigger factor (479 aa).

Residues 174–261 enclose the PPIase FKBP-type domain; the sequence is GDIAVVSFSG…LKELKTRELP (88 aa). The disordered stretch occupies residues 438-479; it reads VLESEAKTSKPAAKSKGSKTKSTKTKTNKANTEKPASDKSKS. Residues 453–464 are compositionally biased toward basic residues; the sequence is KGSKTKSTKTKT. Basic and acidic residues predominate over residues 468 to 479; the sequence is NTEKPASDKSKS.

The protein belongs to the FKBP-type PPIase family. Tig subfamily.

Its subcellular location is the cytoplasm. It carries out the reaction [protein]-peptidylproline (omega=180) = [protein]-peptidylproline (omega=0). Functionally, involved in protein export. Acts as a chaperone by maintaining the newly synthesized protein in an open conformation. Functions as a peptidyl-prolyl cis-trans isomerase. The chain is Trigger factor from Prochlorococcus marinus (strain MIT 9313).